Consider the following 100-residue polypeptide: Urease subunit gamma (100 aa).

This sequence belongs to the urease gamma subunit family. Heterotrimer of UreA (gamma), UreB (beta) and UreC (alpha) subunits. Three heterotrimers associate to form the active enzyme.

Its subcellular location is the cytoplasm. It catalyses the reaction urea + 2 H2O + H(+) = hydrogencarbonate + 2 NH4(+). It participates in nitrogen metabolism; urea degradation; CO(2) and NH(3) from urea (urease route): step 1/1. The chain is Urease subunit gamma from Delftia acidovorans (strain DSM 14801 / SPH-1).